The sequence spans 322 residues: Biotin synthase (322 aa).

Residues 39–266 (NQVQISSLLN…KSVVRLSAGR (228 aa)) form the Radical SAM core domain. Positions 54, 58, and 61 each coordinate [4Fe-4S] cluster. [2Fe-2S] cluster-binding residues include C98, C129, C189, and R261.

Belongs to the radical SAM superfamily. Biotin synthase family. Homodimer. [4Fe-4S] cluster is required as a cofactor. [2Fe-2S] cluster serves as cofactor.

It catalyses the reaction (4R,5S)-dethiobiotin + (sulfur carrier)-SH + 2 reduced [2Fe-2S]-[ferredoxin] + 2 S-adenosyl-L-methionine = (sulfur carrier)-H + biotin + 2 5'-deoxyadenosine + 2 L-methionine + 2 oxidized [2Fe-2S]-[ferredoxin]. Its pathway is cofactor biosynthesis; biotin biosynthesis; biotin from 7,8-diaminononanoate: step 2/2. In terms of biological role, catalyzes the conversion of dethiobiotin (DTB) to biotin by the insertion of a sulfur atom into dethiobiotin via a radical-based mechanism. The protein is Biotin synthase of Vesicomyosocius okutanii subsp. Calyptogena okutanii (strain HA).